Reading from the N-terminus, the 117-residue chain is Large ribosomal subunit protein uL18 (117 aa).

It belongs to the universal ribosomal protein uL18 family. As to quaternary structure, part of the 50S ribosomal subunit; part of the 5S rRNA/L5/L18/L25 subcomplex. Contacts the 5S and 23S rRNAs.

Its function is as follows. This is one of the proteins that bind and probably mediate the attachment of the 5S RNA into the large ribosomal subunit, where it forms part of the central protuberance. The polypeptide is Large ribosomal subunit protein uL18 (Francisella tularensis subsp. tularensis (strain FSC 198)).